The chain runs to 126 residues: MYTIMLKAKLHMARVTHAVLDYEGSCAIDGELLDLAGIRENEQIQIYDVENGNRFTTYAIRGEAGSRLISINGAAAHQAQVGDRVIICSYAHYAEHELATHQPALVYLQDGNQISHTSHAIPVQFA.

Catalysis depends on serine 25, which acts as the Schiff-base intermediate with substrate; via pyruvic acid. Serine 25 carries the pyruvic acid (Ser) modification. A substrate-binding site is contributed by threonine 57. The Proton donor role is filled by tyrosine 58. 73–75 (GAA) contributes to the substrate binding site.

It belongs to the PanD family. As to quaternary structure, heterooctamer of four alpha and four beta subunits. The cofactor is pyruvate. Is synthesized initially as an inactive proenzyme, which is activated by self-cleavage at a specific serine bond to produce a beta-subunit with a hydroxyl group at its C-terminus and an alpha-subunit with a pyruvoyl group at its N-terminus.

Its subcellular location is the cytoplasm. The catalysed reaction is L-aspartate + H(+) = beta-alanine + CO2. Its pathway is cofactor biosynthesis; (R)-pantothenate biosynthesis; beta-alanine from L-aspartate: step 1/1. Functionally, catalyzes the pyruvoyl-dependent decarboxylation of aspartate to produce beta-alanine. In Chromohalobacter salexigens (strain ATCC BAA-138 / DSM 3043 / CIP 106854 / NCIMB 13768 / 1H11), this protein is Aspartate 1-decarboxylase.